A 268-amino-acid chain; its full sequence is NH(3)-dependent NAD(+) synthetase (268 aa).

46–53 (GVSGGQDS) lines the ATP pocket. Position 52 (Asp-52) interacts with Mg(2+). A deamido-NAD(+)-binding site is contributed by Arg-140. Thr-160 is an ATP binding site. Position 165 (Glu-165) interacts with Mg(2+). Deamido-NAD(+) is bound by residues Lys-173 and Asp-180. Lys-189 is a binding site for ATP. A deamido-NAD(+)-binding site is contributed by 260–261 (HK).

Belongs to the NAD synthetase family. In terms of assembly, homodimer.

It catalyses the reaction deamido-NAD(+) + NH4(+) + ATP = AMP + diphosphate + NAD(+) + H(+). Its pathway is cofactor biosynthesis; NAD(+) biosynthesis; NAD(+) from deamido-NAD(+) (ammonia route): step 1/1. Catalyzes the ATP-dependent amidation of deamido-NAD to form NAD. Uses ammonia as a nitrogen source. In Buchnera aphidicola subsp. Acyrthosiphon pisum (strain Tuc7), this protein is NH(3)-dependent NAD(+) synthetase.